A 272-amino-acid chain; its full sequence is NH(3)-dependent NAD(+) synthetase (272 aa).

Residue Y33 coordinates deamido-NAD(+). ATP contacts are provided by residues 45–52 (GISGGQDS), R79, and Q85. D51 is a binding site for Mg(2+). Deamido-NAD(+) is bound at residue R138. T158 provides a ligand contact to ATP. E163 provides a ligand contact to Mg(2+). K171 and D178 together coordinate deamido-NAD(+). ATP contacts are provided by K187 and T209. Residues E224 and 258 to 259 (HK) contribute to the deamido-NAD(+) site.

Belongs to the NAD synthetase family. In terms of assembly, homodimer. In terms of processing, phosphorylated during sporulation.

The enzyme catalyses deamido-NAD(+) + NH4(+) + ATP = AMP + diphosphate + NAD(+) + H(+). Its pathway is cofactor biosynthesis; NAD(+) biosynthesis; NAD(+) from deamido-NAD(+) (ammonia route): step 1/1. Its function is as follows. Catalyzes the ATP-dependent amidation of deamido-NAD to form NAD. Uses ammonia as a nitrogen source. The chain is NH(3)-dependent NAD(+) synthetase from Bacillus subtilis (strain 168).